The chain runs to 461 residues: Cysteine--tRNA ligase (461 aa).

Residue Cys-29 coordinates Zn(2+). A 'HIGH' region motif is present at residues 31–41 (MTVYDFCHIGH). Zn(2+) contacts are provided by Cys-210, His-235, and Glu-239. Residues 267 to 271 (KMSKS) carry the 'KMSKS' region motif. Residue Lys-270 participates in ATP binding.

The protein belongs to the class-I aminoacyl-tRNA synthetase family. Monomer. The cofactor is Zn(2+).

The protein localises to the cytoplasm. The catalysed reaction is tRNA(Cys) + L-cysteine + ATP = L-cysteinyl-tRNA(Cys) + AMP + diphosphate. This chain is Cysteine--tRNA ligase, found in Ectopseudomonas mendocina (strain ymp) (Pseudomonas mendocina).